A 394-amino-acid chain; its full sequence is MEYKPIRKVVSGNYAAAYAALHARVQVVAAYPITPQTSIIEKIAEFIANGEADIQYIPVESEHSAMAACIGASATGARTFTATSAQGLALMHEMLHWAAGARLPIVMVDVNRAMAPPWSVWDDQTDSLSQRDTGWMQFYAENNQEVYDGVLMAYKVAETVNVPAMVVESAFILSHTYDVVEMIPQELVDEFLPPRKPLYSLANFDEPIAVGALATPNDYYEFRYKLAKAHEEAKKVIKEVGKEFGERFGRDYSQMIETGYIDDADFVFMGMGSLMGTVKEAVDLLRKEGYKVGYAKVRWFRPFPKEELVEIAESVKGIAVLDRNFSFGQEGILFTESKGALYNSSAHPLMKNYIVGLGGRDVTVKDIKAIADDMKKVIESGKVDKEVVWYHLKR.

In terms of assembly, heterotetramer of one alpha, one beta, one delta and one gamma chain.

It catalyses the reaction 3-methyl-2-oxobutanoate + 2 oxidized [2Fe-2S]-[ferredoxin] + CoA = 2-methylpropanoyl-CoA + 2 reduced [2Fe-2S]-[ferredoxin] + CO2 + H(+). This is Ketoisovalerate oxidoreductase subunit VorA (vorA) from Pyrococcus furiosus (strain ATCC 43587 / DSM 3638 / JCM 8422 / Vc1).